We begin with the raw amino-acid sequence, 144 residues long: Acylphosphatase-like protein MJ1331 (144 aa).

The 93-residue stretch at T8–T100 folds into the Acylphosphatase-like domain.

The polypeptide is Acylphosphatase-like protein MJ1331 (Methanocaldococcus jannaschii (strain ATCC 43067 / DSM 2661 / JAL-1 / JCM 10045 / NBRC 100440) (Methanococcus jannaschii)).